The sequence spans 101 residues: Small ribosomal subunit protein uS14 (101 aa).

The protein belongs to the universal ribosomal protein uS14 family. Part of the 30S ribosomal subunit. Contacts proteins S3 and S10.

Functionally, binds 16S rRNA, required for the assembly of 30S particles and may also be responsible for determining the conformation of the 16S rRNA at the A site. This Shewanella woodyi (strain ATCC 51908 / MS32) protein is Small ribosomal subunit protein uS14.